The following is a 271-amino-acid chain: Ribosomal RNA small subunit methyltransferase A (271 aa).

Positions 18, 20, 45, 66, 91, and 112 each coordinate S-adenosyl-L-methionine.

Belongs to the class I-like SAM-binding methyltransferase superfamily. rRNA adenine N(6)-methyltransferase family. RsmA subfamily.

It localises to the cytoplasm. The catalysed reaction is adenosine(1518)/adenosine(1519) in 16S rRNA + 4 S-adenosyl-L-methionine = N(6)-dimethyladenosine(1518)/N(6)-dimethyladenosine(1519) in 16S rRNA + 4 S-adenosyl-L-homocysteine + 4 H(+). Its function is as follows. Specifically dimethylates two adjacent adenosines (A1518 and A1519) in the loop of a conserved hairpin near the 3'-end of 16S rRNA in the 30S particle. May play a critical role in biogenesis of 30S subunits. This is Ribosomal RNA small subunit methyltransferase A from Vibrio atlanticus (strain LGP32) (Vibrio splendidus (strain Mel32)).